Here is a 654-residue protein sequence, read N- to C-terminus: Sphingosine kinase 2 (654 aa).

Residues 1–17 (MNGHLEAEEQQDQRPDQ) show a composition bias toward basic and acidic residues. The segment at 1–28 (MNGHLEAEEQQDQRPDQELTGSWGHGPR) is disordered. Residues 1–175 (MNGHLEAEEQ…LPGDGEITPD (175 aa)) are required for binding to sulfatide and phosphoinositides and for membrane localizatione. Residues 122-130 (RGRRGARRR) carry the Nuclear localization signal motif. The region spanning 178 to 325 (PRPPRLLLLV…LDLLSVTLAS (148 aa)) is the DAGKc domain. Residues 188–190 (NPF) and 220–224 (TERQN) each bind ATP. 245–248 (SGDG) contributes to the substrate binding site. Residue aspartate 247 is the Proton donor/acceptor of the active site. ATP is bound by residues glutamate 252 and 277–279 (GSG). Aspartate 344 lines the substrate pocket. 2 residues coordinate ATP: arginine 351 and arginine 357. Serine 387 is modified (phosphoserine; by MAPK). Residues serine 393 and serine 399 each carry the phosphoserine modification. The tract at residues 400–509 (ELTLTPDPAP…PLPTPDARVG (110 aa)) is disordered. The Nuclear export signal motif lies at 416–425 (LHRSVSDLPL). Phosphoserine; by PKD occurs at positions 419 and 421. Over residues 447 to 461 (NGGGPELAGDWGGAG) the composition is skewed to gly residues. Residues 462–482 (DAPLSPDPLLSSPPGSPKAAL) are compositionally biased toward low complexity. Serine 477 bears the Phosphoserine mark. Threonine 614 is subject to Phosphothreonine; by MAPK. An ATP-binding site is contributed by 622–624 (DGE).

In terms of assembly, interacts with histone H3. Interacts with HDAC1, HDAC2, MBD2 and SIN3A. Interacts with EEF1A1; the interaction enhances SPHK2 kinase activity. Interacts with PHB2. Mg(2+) serves as cofactor. Post-translationally, phosphorylated by PKD on Ser-419 and Ser-421 upon PMA treatment. Phosphorylation induces export from the nucleus to the cytoplasm. Phosphorylated by MAPK1 and MAPK2 at Ser-387 and Thr-614, phosphorylation is induced by agonists such as EGF and PMA and increases kinase activity. Cleaved by CASP1 in apoptotic cells. The truncated form is released from cells. In terms of tissue distribution, mainly expressed in adult kidney, liver, and brain. Expressed in cerebral cortex and hippocampus (at protein level). Isoform 1 is the predominant form expressed in most tissues.

It localises to the cytoplasm. The protein resides in the nucleus. Its subcellular location is the endoplasmic reticulum. The protein localises to the mitochondrion inner membrane. It is found in the lysosome membrane. It carries out the reaction a sphingoid base + ATP = a sphingoid 1-phosphate + ADP + H(+). It catalyses the reaction sphing-4-enine + ATP = sphing-4-enine 1-phosphate + ADP + H(+). The enzyme catalyses sphinganine + ATP = sphinganine 1-phosphate + ADP + H(+). The catalysed reaction is (4R)-hydroxysphinganine + ATP = (4R)-hydroxysphinganine 1-phosphate + ADP + H(+). With respect to regulation, inhibited by sulfatide. Kinase activity is increased by phosphorylation by MAPK2 upon PMA or EGF treatments. In terms of biological role, catalyzes the phosphorylation of sphingosine to form sphingosine-1-phosphate (SPP), a lipid mediator with both intra- and extracellular functions. Also acts on D-erythro-dihydrosphingosine, D-erythro-sphingosine and L-threo-dihydrosphingosine. Binds phosphoinositides. In contrast to prosurvival SPHK1, has a positive effect on intracellular ceramide levels, inhibits cells growth and enhances apoptosis. In mitochondria, is important for cytochrome-c oxidase assembly and mitochondrial respiration. The SPP produced in mitochondria binds PHB2 and modulates the regulation via PHB2 of complex IV assembly and respiration. In nucleus, plays a role in epigenetic regulation of gene expression. Interacts with HDAC1 and HDAC2 and, through SPP production, inhibits their enzymatic activity, preventing the removal of acetyl groups from lysine residues with histones. Up-regulates acetylation of histone H3-K9, histone H4-K5 and histone H2B-K12. In nucleus, may have an inhibitory effect on DNA synthesis and cell cycle. In mast cells, is the main regulator of SPP production which mediates calcium influx, NF-kappa-B activation, cytokine production, such as TNF and IL6, and degranulation of mast cells. In dopaminergic neurons, is involved in promoting mitochondrial functions regulating ATP and ROS levels. Also involved in the regulation of glucose and lipid metabolism. In Homo sapiens (Human), this protein is Sphingosine kinase 2.